A 438-amino-acid chain; its full sequence is Aspartate--tRNA(Asp) ligase (438 aa).

Residue glutamate 170 coordinates L-aspartate. Positions 192–195 are aspartate; it reads QLYK. Arginine 214 contacts L-aspartate. Residues 214-216, 222-224, and glutamate 361 contribute to the ATP site; these read RAE and RHL. 2 residues coordinate Mg(2+): glutamate 361 and serine 364. Positions 364 and 368 each coordinate L-aspartate. 409–412 is an ATP binding site; the sequence is GAER.

The protein belongs to the class-II aminoacyl-tRNA synthetase family. Type 2 subfamily. In terms of assembly, homodimer. Mg(2+) is required as a cofactor.

It is found in the cytoplasm. It catalyses the reaction tRNA(Asp) + L-aspartate + ATP = L-aspartyl-tRNA(Asp) + AMP + diphosphate. In terms of biological role, catalyzes the attachment of L-aspartate to tRNA(Asp) in a two-step reaction: L-aspartate is first activated by ATP to form Asp-AMP and then transferred to the acceptor end of tRNA(Asp). This Pyrococcus horikoshii (strain ATCC 700860 / DSM 12428 / JCM 9974 / NBRC 100139 / OT-3) protein is Aspartate--tRNA(Asp) ligase.